A 49-amino-acid polypeptide reads, in one-letter code: Large ribosomal subunit protein bL33A (49 aa).

It belongs to the bacterial ribosomal protein bL33 family.

This chain is Large ribosomal subunit protein bL33A, found in Staphylococcus aureus (strain COL).